The primary structure comprises 72 residues: Translation initiation factor IF-1 (72 aa).

An S1-like domain is found at 1-72; the sequence is MSKDDSIEFE…TKGRITYRMK (72 aa).

Belongs to the IF-1 family. In terms of assembly, component of the 30S ribosomal translation pre-initiation complex which assembles on the 30S ribosome in the order IF-2 and IF-3, IF-1 and N-formylmethionyl-tRNA(fMet); mRNA recruitment can occur at any time during PIC assembly.

The protein resides in the cytoplasm. Its function is as follows. One of the essential components for the initiation of protein synthesis. Stabilizes the binding of IF-2 and IF-3 on the 30S subunit to which N-formylmethionyl-tRNA(fMet) subsequently binds. Helps modulate mRNA selection, yielding the 30S pre-initiation complex (PIC). Upon addition of the 50S ribosomal subunit IF-1, IF-2 and IF-3 are released leaving the mature 70S translation initiation complex. In Xanthomonas euvesicatoria pv. vesicatoria (strain 85-10) (Xanthomonas campestris pv. vesicatoria), this protein is Translation initiation factor IF-1.